The primary structure comprises 181 residues: MSFKPIDPKRDEIRRYLERGSVLDSLTKLFIRVIKERPENPMDYIRNHIGVVRHQHDKYERLQQDLQLANEEIQRLRAIINGINPDVLQGHQPVASSEVVVATEAPQTVAESTEAAEQQQQQQQQENGETELEKPNESSADVAEITAAVEACQIEGNSVVTTDEAAQPSPTVQAEASGSSE.

The span at Glu111–Asn127 shows a compositional bias: low complexity. 2 disordered regions span residues Glu111–Ile145 and Val159–Glu181. Residues Pro168–Glu181 show a composition bias toward polar residues.

This sequence belongs to the AMY1 family.

It localises to the nucleus. The polypeptide is c-Myc-binding protein homolog (Drosophila melanogaster (Fruit fly)).